Reading from the N-terminus, the 119-residue chain is Beta-2-microglobulin (119 aa).

An N-terminal signal peptide occupies residues 1 to 20; sequence MARSVVVALLVLLSLSGLEA. The Ig-like C1-type domain occupies 25–114; that stretch reads PKIQVYSRHP…VTFSTPKTVK (90 aa). Cys45 and Cys100 are disulfide-bonded.

Belongs to the beta-2-microglobulin family. As to quaternary structure, heterodimer of an alpha chain and a beta chain. Beta-2-microglobulin is the beta-chain of major histocompatibility complex class I molecules.

Its subcellular location is the secreted. Its function is as follows. Component of the class I major histocompatibility complex (MHC). Involved in the presentation of peptide antigens to the immune system. This is Beta-2-microglobulin (B2M) from Ateles paniscus (Black spider monkey).